A 273-amino-acid chain; its full sequence is Putative cysteine-rich repeat secretory protein 40 (273 aa).

The signal sequence occupies residues M1–S32. 2 consecutive Gnk2-homologous domains span residues Y39–V141 and Y151–F264.

Belongs to the cysteine-rich repeat secretory protein family.

The protein resides in the secreted. The chain is Putative cysteine-rich repeat secretory protein 40 (CRRSP40) from Arabidopsis thaliana (Mouse-ear cress).